The sequence spans 102 residues: ATP-dependent Clp protease adapter protein ClpS (102 aa).

It belongs to the ClpS family. As to quaternary structure, binds to the N-terminal domain of the chaperone ClpA.

Its function is as follows. Involved in the modulation of the specificity of the ClpAP-mediated ATP-dependent protein degradation. The polypeptide is ATP-dependent Clp protease adapter protein ClpS (Nitrosospira multiformis (strain ATCC 25196 / NCIMB 11849 / C 71)).